Consider the following 227-residue polypeptide: MENLKKMAGIKAAEFVKDGMVVGLGTGSTAYYFVEEIGRRIKEEGLQIIAVTTSSVTTKQAEGLNIPLKSIDQVDFVDVTVDGADEVDSQFNGIKGGGGALLMEKVVATPSKEYIWVVDESKLVEKLGAFKLPVEVVQYGAEQVFRRFERAGYKPSFREKDGQRFVTDMQNFIIDLALDVIENPIAFGQELDHVVGVVEHGLFNQMVDKVIVAGRDGVQISTSKKGK.

Substrate-binding positions include 26 to 29 (TGST), 82 to 85 (DGAD), and 95 to 98 (KGGG). The active-site Proton acceptor is E104. K122 lines the substrate pocket.

It belongs to the ribose 5-phosphate isomerase family. In terms of assembly, homodimer.

It catalyses the reaction aldehydo-D-ribose 5-phosphate = D-ribulose 5-phosphate. The protein operates within carbohydrate degradation; pentose phosphate pathway; D-ribose 5-phosphate from D-ribulose 5-phosphate (non-oxidative stage): step 1/1. Catalyzes the reversible conversion of ribose-5-phosphate to ribulose 5-phosphate. The chain is Ribose-5-phosphate isomerase A from Streptococcus pneumoniae (strain ATCC 700669 / Spain 23F-1).